The sequence spans 218 residues: Cell division protein SepF (218 aa).

A disordered region spans residues 20 to 81 (DDEYYDDRAP…GYRGGYADEP (62 aa)). The span at 36-65 (PRFDDDYGRYDGRDYDDARSDSRGDLRGEP) shows a compositional bias: basic and acidic residues.

It belongs to the SepF family. As to quaternary structure, homodimer. Interacts with FtsZ.

It is found in the cytoplasm. Cell division protein that is part of the divisome complex and is recruited early to the Z-ring. Probably stimulates Z-ring formation, perhaps through the cross-linking of FtsZ protofilaments. Its function overlaps with FtsA. The protein is Cell division protein SepF of Mycobacterium bovis (strain ATCC BAA-935 / AF2122/97).